A 215-amino-acid polypeptide reads, in one-letter code: MTTQRHYSPIDRLLLQADMAMRTLLPFSGQPYRPSPAIVQPDAQMSETETRHVAGLMRINHTGEVCAQALYQGQALTAKLPQVRAAMEHAAEEEIDHLAWCEQRIRQLGSHPSVLNPLFYGLSFGIGAAAGLISDKVSLGFVAATEHQVCKHLDEHLEQLPAEDEKSRAILEQMRIDEEHHAESALDAGGFRFPAPVRFGMSLLAKVMTKSTYRI.

Residues E64, E94, H97, E146, E178, and H181 each contribute to the Fe cation site.

This sequence belongs to the COQ7 family. Fe cation is required as a cofactor.

Its subcellular location is the cell membrane. The catalysed reaction is a 5-methoxy-2-methyl-3-(all-trans-polyprenyl)benzene-1,4-diol + AH2 + O2 = a 3-demethylubiquinol + A + H2O. It functions in the pathway cofactor biosynthesis; ubiquinone biosynthesis. Catalyzes the hydroxylation of 2-nonaprenyl-3-methyl-6-methoxy-1,4-benzoquinol during ubiquinone biosynthesis. The chain is 3-demethoxyubiquinol 3-hydroxylase from Pseudomonas fluorescens (strain SBW25).